The primary structure comprises 354 residues: Protein sex-lethal (354 aa).

Residues 1–21 are disordered; sequence MYGNNNPGSNNNNGGYPPYGY. RRM domains lie at 125-203 and 211-291; these read TNLI…YARP and TNLY…LAEE.

In terms of assembly, part of a complex containing fl(2)d, Sxl and vir. Part of a complex composed of at least mei-P26, bam, bgcn and Sxl; this complex is involved in translational repression of nanos mRNA. interacts with mei-p26. Interacts with nito. Interacts with Unr; cooperates with Unr to prevent translation of msl-2 transcripts. Interacts with how; promoting nuclear retention of msl-2 transcripts. Expressed in somatic tissues, but not in the pole cells, which are the precursors of the germline. Expressed in the anterior of the germarium.

It is found in the nucleus. The protein localises to the cytoplasm. Sex determination switch protein, which controls sexual development and dosage compensation in females. Sxl protein is only active in females: it is inactive in males throughout development. Acts as a mRNA-binding protein, which specifically binds to a subset of pre-mRNAs and mRNAs and regulates their processing and/or translation. Binds nanos mRNA and is involved in bam-bgcn mediated repression of nanos mRNA translation. Promotes sexual development by controlling the female-specific alternative splicing of the transformer (tra) pre-mRNA: binds tightly to a characteristic uridine-rich polypyrimidine tract at the non-sex specific 3' splice site in one of the tra introns, preventing the general splicing factor U2AF from binding to this site and forcing it to bind to the female-specific 3' splice site. Acts as an inhibitor of dosage compensation in females by preventing production of msl-2 protein, an essential component of the MSL complex, the complex that mediates X-chromosome dosage compensation. Specifically binds to uridine stretches in both the 5'- and 3'-UTR of msl-2 transcripts. Sxl first acts at the splicing level by promoting retention of an intron in the 5' UTR of msl-2 pre-mRNA. The retained intron contains Sxl-binding sites that are required for subsequent steps of repression: after msl-2 mRNA export into the cytoplasm, Sxl coordinates its translational repression by targeting early steps of translation initiation. Together with how, Sxl also prevents production of msl-2 protein by preventing nuclear export of msl-2 transcripts. Its function is as follows. Embryo-specific product, which is expressed early only in female embryos and specifies female-adult specific splicing. The polypeptide is Protein sex-lethal (Drosophila melanogaster (Fruit fly)).